Consider the following 258-residue polypeptide: Polysialic acid transport protein KpsM (258 aa).

The region spanning 30 to 251 (LGYLWAILEP…FIGLALYRTR (222 aa)) is the ABC transmembrane type-2 domain. Helical transmembrane passes span 33–53 (LWAILEPSAHLLILLGIFGYI), 61–81 (ISFPVFLLNGLIPFFIFSSIS), 110–130 (ALLETLIYVAVYILLMLIVWM), 144–164 (VLTWSLLIILSCGIGLIFMVV), 175–195 (LPILLKPLYFISCIMFPLHSI), and 227–247 (GVSLNYLAMFTLVTLFIGLAL).

It belongs to the ABC-2 integral membrane protein family.

The protein resides in the cell inner membrane. KpsM and KpsT constitute a system for the transport of polysialic acid across the cytoplasmic membrane. This chain is Polysialic acid transport protein KpsM (kpsM), found in Escherichia coli.